The primary structure comprises 365 residues: Sulfate/thiosulfate import ATP-binding protein CysA (365 aa).

Residues 3-237 enclose the ABC transporter domain; sequence IEIANIKKSF…PATRFVLEFM (235 aa). An ATP-binding site is contributed by 35–42; the sequence is GPSGSGKT.

The protein belongs to the ABC transporter superfamily. Sulfate/tungstate importer (TC 3.A.1.6) family. The complex is composed of two ATP-binding proteins (CysA), two transmembrane proteins (CysT and CysW) and a solute-binding protein (CysP).

It is found in the cell inner membrane. It carries out the reaction sulfate(out) + ATP + H2O = sulfate(in) + ADP + phosphate + H(+). The catalysed reaction is thiosulfate(out) + ATP + H2O = thiosulfate(in) + ADP + phosphate + H(+). Its function is as follows. Part of the ABC transporter complex CysAWTP involved in sulfate/thiosulfate import. Responsible for energy coupling to the transport system. In Escherichia coli O157:H7, this protein is Sulfate/thiosulfate import ATP-binding protein CysA.